The primary structure comprises 220 residues: Ktr system potassium uptake protein A (220 aa).

The RCK N-terminal domain occupies 5 to 121; sequence DKQFAVIGLG…LQKIGADHII (117 aa). Residues Arg-15, 35 to 37, 55 to 56, 77 to 79, 102 to 104, and Glu-124 each bind ATP; these read DIN, NC, IGA, and KAN. The RCK C-terminal domain maps to 138–220; that stretch reads KRVLEFHPLG…DKLANKLKSL (83 aa).

Belongs to the KtrA potassium transport family. As to quaternary structure, the uptake system is composed of KtrA and KtrB.

It localises to the cell inner membrane. With respect to regulation, requires both ATP and a high membrane potential for activity. Binding of ATP causes a conformational change in KtrA, which promotes formation of the KtrAB complex. Can also bind, with lower affinity, other nucleotides such as NADH or NAD(+), but only ATP can induce a conformational change. Its function is as follows. Part of the Na(+)-dependent high affinity K(+) uptake system KtrAB. KtrA is the regulatory subunit and plays an important role in the substrate specificity and transport mechanism of the system. Binds ATP but lacks ATPase activity. The sequence is that of Ktr system potassium uptake protein A (ktrA) from Vibrio alginolyticus.